Here is a 515-residue protein sequence, read N- to C-terminus: Putative ammonium transporter 2 (515 aa).

The next 12 helical transmembrane spans lie at 34-54, 72-92, 124-144, 156-176, 191-211, 226-246, 266-286, 291-311, 321-337, 346-366, 381-401, and 404-424; these read GVWMMASSFIIFTMTAGFGLL, VFDVIFGGLAYWMFGYGLTFG, GISYSLFIFQMSFATTTSTIV, SHCFISFFITLVHSVAGHWVW, AGCSAVHLVGGVSGLVATLYL, VSDPTKAILGFLMIWWGWLAF, AVGTILASAGGGVVTVIITRL, IQMDMLIDGMLASLVASTGGC, LVGAIGSSLALAAYPVT, VGVFPVHVVGSIWGMIAPAIF, FQTSDEINGLLYGGGFYLLFL, and FVILVIGTYSAICAFIILFLI.

This sequence belongs to the ammonia transporter channel (TC 1.A.11.2) family.

It localises to the membrane. Involved in the uptake of ammonia. Implicated in aging. The sequence is that of Putative ammonium transporter 2 (amt-2) from Caenorhabditis elegans.